The chain runs to 339 residues: DNA-directed RNA polymerase subunit alpha (339 aa).

An alpha N-terminal domain (alpha-NTD) region spans residues 1–235 (MVIQKNWQEL…DQLQVFVNFE (235 aa)). Positions 251 to 339 (FNPALLKKVD…DLAKRFEEHY (89 aa)) are alpha C-terminal domain (alpha-CTD).

This sequence belongs to the RNA polymerase alpha chain family. Homodimer. The RNAP catalytic core consists of 2 alpha, 1 beta, 1 beta' and 1 omega subunit. When a sigma factor is associated with the core the holoenzyme is formed, which can initiate transcription.

It carries out the reaction RNA(n) + a ribonucleoside 5'-triphosphate = RNA(n+1) + diphosphate. In terms of biological role, DNA-dependent RNA polymerase catalyzes the transcription of DNA into RNA using the four ribonucleoside triphosphates as substrates. The polypeptide is DNA-directed RNA polymerase subunit alpha (Methylobacterium radiotolerans (strain ATCC 27329 / DSM 1819 / JCM 2831 / NBRC 15690 / NCIMB 10815 / 0-1)).